A 364-amino-acid chain; its full sequence is D-alanine--D-alanine ligase (364 aa).

Residues 141–346 (KNLFAQAGLR…YSELIERLIA (206 aa)) form the ATP-grasp domain. 174–229 (EQELGYPCFVKPANAGSSVGISKCKQRDDLKTAFAEAFKYDRKIIIEESIVGREIE) contributes to the ATP binding site. The Mg(2+) site is built by Asp300, Glu313, and Asn315.

This sequence belongs to the D-alanine--D-alanine ligase family. It depends on Mg(2+) as a cofactor. Mn(2+) is required as a cofactor.

It is found in the cytoplasm. It carries out the reaction 2 D-alanine + ATP = D-alanyl-D-alanine + ADP + phosphate + H(+). It functions in the pathway cell wall biogenesis; peptidoglycan biosynthesis. Cell wall formation. This is D-alanine--D-alanine ligase from Geobacillus thermodenitrificans (strain NG80-2).